Consider the following 174-residue polypeptide: Peptide deformylase (174 aa).

Residues Cys-96 and His-138 each coordinate Fe cation. Residue Glu-139 is part of the active site. His-142 provides a ligand contact to Fe cation.

Belongs to the polypeptide deformylase family. It depends on Fe(2+) as a cofactor.

It catalyses the reaction N-terminal N-formyl-L-methionyl-[peptide] + H2O = N-terminal L-methionyl-[peptide] + formate. Its function is as follows. Removes the formyl group from the N-terminal Met of newly synthesized proteins. Requires at least a dipeptide for an efficient rate of reaction. N-terminal L-methionine is a prerequisite for activity but the enzyme has broad specificity at other positions. The sequence is that of Peptide deformylase from Helicobacter pylori (strain HPAG1).